The chain runs to 169 residues: Ureidoglycolate lyase (169 aa).

It belongs to the ureidoglycolate lyase family. In terms of assembly, homodimer. It depends on Ni(2+) as a cofactor.

The enzyme catalyses (S)-ureidoglycolate = urea + glyoxylate. It participates in nitrogen metabolism; (S)-allantoin degradation. In terms of biological role, catalyzes the catabolism of the allantoin degradation intermediate (S)-ureidoglycolate, generating urea and glyoxylate. Involved in the utilization of allantoin as nitrogen source. The polypeptide is Ureidoglycolate lyase (Brucella melitensis biotype 2 (strain ATCC 23457)).